We begin with the raw amino-acid sequence, 185 residues long: Ribosome-recycling factor (185 aa).

Positions 142–164 are enriched in basic and acidic residues; the sequence is IKKDGDAGEDDVTRAEKDLDKST. The segment at 142-173 is disordered; it reads IKKDGDAGEDDVTRAEKDLDKSTHQYTSQVDD.

Belongs to the RRF family.

The protein resides in the cytoplasm. In terms of biological role, responsible for the release of ribosomes from messenger RNA at the termination of protein biosynthesis. May increase the efficiency of translation by recycling ribosomes from one round of translation to another. In Mycolicibacterium gilvum (strain PYR-GCK) (Mycobacterium gilvum (strain PYR-GCK)), this protein is Ribosome-recycling factor.